We begin with the raw amino-acid sequence, 23 residues long: U3-ctenitoxin-Co1a (23 aa).

2 cysteine pairs are disulfide-bonded: cysteine 2/cysteine 17 and cysteine 9/cysteine 22.

As to expression, expressed by the venom gland.

Its subcellular location is the secreted. Antagonist of L-type calcium channels (Cav1/CACNA1). This is U3-ctenitoxin-Co1a from Ctenus ornatus (Brazilian spider).